A 755-amino-acid polypeptide reads, in one-letter code: Probable ubiquitin carboxyl-terminal hydrolase creB (755 aa).

The segment at 1 to 32 (MGSFLRSLRRDVGPPTPSVGATPAKKEPPVPP) is disordered. The region spanning 55 to 468 (FGMENYGNTC…CAYVLFYQET (414 aa)) is the USP domain. The active-site Nucleophile is the Cys64. Disordered stretches follow at residues 119–146 (EKQK…DSPE) and 237–270 (EASK…TPNT). Basic and acidic residues predominate over residues 237 to 246 (EASKQPEPER). A compositionally biased stretch (polar residues) spans 254-270 (ADSTELSGSSGSKTPNT). The active-site Proton acceptor is His419. The tract at residues 495-755 (TLKQNGYPLS…LKKKSFSILS (261 aa)) is disordered. A compositionally biased stretch (low complexity) spans 547–560 (ESSPADPSTTASAT). Residues 577–648 (KKSDSHFKKE…RRHSPDDTKK (72 aa)) are compositionally biased toward basic and acidic residues. Positions 581–630 (SHFKKERAKEEKERKANEKEKEKQRRRDQEARIREQRREDAEIRAALEAS) form a coiled coil. Positions 654 to 666 (SRLKRGSKSFSHR) are enriched in basic residues. Positions 693 to 709 (NGASESQQQLPNGQSPG) are enriched in polar residues. Basic and acidic residues predominate over residues 718-733 (TGLDEERDTLKDPKHD). The span at 734-755 (RSGHHGKWRSFSLKKKSFSILS) shows a compositional bias: basic residues.

The protein belongs to the peptidase C19 family. Interacts with creA, creC and qutD.

The enzyme catalyses Thiol-dependent hydrolysis of ester, thioester, amide, peptide and isopeptide bonds formed by the C-terminal Gly of ubiquitin (a 76-residue protein attached to proteins as an intracellular targeting signal).. In terms of biological role, ubiquitin thioesterase component of the regulatory network controlling carbon source utilization through ubiquitination and deubiquitination involving creA, creB, creC, creD and acrB. Deubiquitinates the creA catabolic repressor and the quinate permease qutD. Also plays a role in response to carbon starvation and the control of extracellular proteases activity. This Aspergillus flavus (strain ATCC 200026 / FGSC A1120 / IAM 13836 / NRRL 3357 / JCM 12722 / SRRC 167) protein is Probable ubiquitin carboxyl-terminal hydrolase creB (creB).